The chain runs to 139 residues: D-ribose pyranase (139 aa).

Catalysis depends on H20, which acts as the Proton donor. Residues D28, H106, and 128 to 130 (YAN) contribute to the substrate site.

Belongs to the RbsD / FucU family. RbsD subfamily. As to quaternary structure, homodecamer.

It is found in the cytoplasm. The catalysed reaction is beta-D-ribopyranose = beta-D-ribofuranose. It functions in the pathway carbohydrate metabolism; D-ribose degradation; D-ribose 5-phosphate from beta-D-ribopyranose: step 1/2. In terms of biological role, catalyzes the interconversion of beta-pyran and beta-furan forms of D-ribose. The sequence is that of D-ribose pyranase from Maridesulfovibrio salexigens (strain ATCC 14822 / DSM 2638 / NCIMB 8403 / VKM B-1763) (Desulfovibrio salexigens).